The primary structure comprises 119 residues: MNPEEIRQRRLQEMQAKAQEQGAANDPEAQRQAQEQQMQYEMQKQKILRQILSEDARSRLARIKLAKPQFAEQVEMQLIQLAQAGKLPIPLTDEYFKGLLDRIYEMNKPAKKEITIMRR.

The span at 1–12 (MNPEEIRQRRLQ) shows a compositional bias: basic and acidic residues. A disordered region spans residues 1–37 (MNPEEIRQRRLQEMQAKAQEQGAANDPEAQRQAQEQQ).

This sequence belongs to the PDCD5 family.

The protein is DNA-binding protein MmarC7_1157 of Methanococcus maripaludis (strain C7 / ATCC BAA-1331).